A 1416-amino-acid polypeptide reads, in one-letter code: DNA-directed RNA polymerase subunit beta' (1416 aa).

Positions 60, 62, 75, and 78 each coordinate Zn(2+). 3 residues coordinate Mg(2+): D449, D451, and D453. The Zn(2+) site is built by C781, C855, C862, and C865.

It belongs to the RNA polymerase beta' chain family. The RNAP catalytic core consists of 2 alpha, 1 beta, 1 beta' and 1 omega subunit. When a sigma factor is associated with the core the holoenzyme is formed, which can initiate transcription. Requires Mg(2+) as cofactor. It depends on Zn(2+) as a cofactor.

It carries out the reaction RNA(n) + a ribonucleoside 5'-triphosphate = RNA(n+1) + diphosphate. Its function is as follows. DNA-dependent RNA polymerase catalyzes the transcription of DNA into RNA using the four ribonucleoside triphosphates as substrates. The chain is DNA-directed RNA polymerase subunit beta' from Treponema pallidum (strain Nichols).